We begin with the raw amino-acid sequence, 282 residues long: WRKY transcription factor 71 (282 aa).

Residues 63-121 are disordered; the sequence is LTSNSPVVSSSSNEGEPKENTNDKSDQMEDNEGDLHGVGESSKQLTKQGKKKGEKKERE. Residues 65-75 are compositionally biased toward low complexity; sequence SNSPVVSSSSN. The segment covering 77-99 has biased composition (basic and acidic residues); sequence GEPKENTNDKSDQMEDNEGDLHG. Residues 130–195 constitute a DNA-binding region (WRKY); sequence SEIDHLEDGY…YEGKHNHPIP (66 aa).

Belongs to the WRKY group II-c family.

The protein resides in the nucleus. Functionally, transcription factor. Interacts specifically with the W box (5'-(T)TGAC[CT]-3'), a frequently occurring elicitor-responsive cis-acting element. The protein is WRKY transcription factor 71 (WRKY71) of Arabidopsis thaliana (Mouse-ear cress).